The chain runs to 122 residues: Secreted RxLR effector protein 80 (122 aa).

An N-terminal signal peptide occupies residues 1 to 21; it reads MKKRALPIVIFVISLQQSSQS. The RxLR motif lies at 72-75; the sequence is RSLR.

Belongs to the RxLR effector family.

It is found in the secreted. Its subcellular location is the host endoplasmic reticulum membrane. Functionally, secreted effector that dos not suppress the host cell death induced by cell death-inducing proteins. The protein is Secreted RxLR effector protein 80 of Plasmopara viticola (Downy mildew of grapevine).